The sequence spans 218 residues: Calcineurin B-like protein 5 (218 aa).

EF-hand domains are found at residues 35-69 (EVEA…FRNK), 70-105 (KTNL…FHPD), 107-142 (PEEQ…LLDE), and 151-186 (AVEM…NPYV).

It belongs to the calcineurin regulatory subunit family. Homodimer. As to expression, expressed at low levels in roots, shoots, culms, leaves and young spikelets.

Acts as a calcium sensor. CBL proteins interact with CIPK serine-threonine protein kinases. Binding of a CBL protein to the regulatory NAF domain of a CIPK protein lead to the activation of the kinase in a calcium-dependent manner. The chain is Calcineurin B-like protein 5 (CBL5) from Oryza sativa subsp. japonica (Rice).